Here is a 515-residue protein sequence, read N- to C-terminus: Endoglucanase 2 (515 aa).

An N-terminal signal peptide occupies residues 1–31 (MVAKPRSRCCCCSVFIGVIILIAIIIAVIFT). An N-linked (GlcNAc...) asparagine glycan is attached at N37. D100 functions as the Nucleophile in the catalytic mechanism. N-linked (GlcNAc...) asparagine glycosylation occurs at N250. The active site involves H433. Residue N475 is glycosylated (N-linked (GlcNAc...) asparagine). D480 is a catalytic residue. N483 carries N-linked (GlcNAc...) asparagine glycosylation. Residue E489 is part of the active site.

The protein belongs to the glycosyl hydrolase 9 (cellulase E) family.

It localises to the secreted. The catalysed reaction is Endohydrolysis of (1-&gt;4)-beta-D-glucosidic linkages in cellulose, lichenin and cereal beta-D-glucans.. This Arabidopsis thaliana (Mouse-ear cress) protein is Endoglucanase 2.